The following is a 136-amino-acid chain: Large ribosomal subunit protein uL3 (136 aa).

Residue Gln83 is modified to N5-methylglutamine.

Belongs to the universal ribosomal protein uL3 family. In terms of assembly, part of the 50S ribosomal subunit. Forms a cluster with proteins L14 and L19. Methylated by PrmB.

One of the primary rRNA binding proteins, it binds directly near the 3'-end of the 23S rRNA, where it nucleates assembly of the 50S subunit. The sequence is that of Large ribosomal subunit protein uL3 (rplC) from Carsonella ruddii.